The following is a 113-amino-acid chain: Gamma-glutamylcyclotransferase family protein YtfP (113 aa).

Belongs to the gamma-glutamylcyclotransferase family.

In Escherichia coli O157:H7, this protein is Gamma-glutamylcyclotransferase family protein YtfP (ytfP).